The following is a 63-amino-acid chain: Large ribosomal subunit protein bL35 (63 aa).

Residues 1 to 22 (MPKMKTKSGATKRFKKTATGFK) form a disordered region.

This sequence belongs to the bacterial ribosomal protein bL35 family.

The protein is Large ribosomal subunit protein bL35 of Marinobacter nauticus (strain ATCC 700491 / DSM 11845 / VT8) (Marinobacter aquaeolei).